The primary structure comprises 64 residues: MAQGGQVSAGGGRRDDDEPIEQTSGAGTQQVNVTGTDDLLDEIDGLLENNAEEFVRSYVQKGGQ.

A disordered region spans residues 1–35; the sequence is MAQGGQVSAGGGRRDDDEPIEQTSGAGTQQVNVTG. A compositionally biased stretch (polar residues) spans 21-33; sequence EQTSGAGTQQVNV. Positions 21 to 58 are ARC ATPase binding; the sequence is EQTSGAGTQQVNVTGTDDLLDEIDGLLENNAEEFVRSY. A Deamidated glutamine modification is found at Q64. Q64 is covalently cross-linked (Isoglutamyl lysine isopeptide (Gln-Lys) (interchain with K-? in acceptor proteins)).

It belongs to the prokaryotic ubiquitin-like protein family. In terms of assembly, strongly interacts with the proteasome-associated ATPase ARC through a hydrophobic interface; the interacting region of Pup lies in its C-terminal half. There is one Pup binding site per ARC hexamer ring. In terms of processing, is modified by deamidation of its C-terminal glutamine to glutamate by the deamidase Dop, a prerequisite to the subsequent pupylation process.

The protein operates within protein degradation; proteasomal Pup-dependent pathway. In terms of biological role, protein modifier that is covalently attached to lysine residues of substrate proteins, thereby targeting them for proteasomal degradation. The tagging system is termed pupylation. In Corynebacterium jeikeium (strain K411), this protein is Prokaryotic ubiquitin-like protein Pup.